The chain runs to 258 residues: Ribosome maturation factor RimP (258 aa).

2 disordered regions span residues 48-88 (PQRP…PTSA) and 212-258 (IFKK…AEND). Basic residues predominate over residues 215-224 (KPQKPGKKPG).

It belongs to the RimP family.

The protein resides in the cytoplasm. Its function is as follows. Required for maturation of 30S ribosomal subunits. This Desulfovibrio desulfuricans (strain ATCC 27774 / DSM 6949 / MB) protein is Ribosome maturation factor RimP.